Consider the following 339-residue polypeptide: Acyl-CoA dehydrogenase FadE28 (339 aa).

Residues Arg227, Gln238, His295, and Gly299 each contribute to the FAD site.

This sequence belongs to the acyl-CoA dehydrogenase family. In terms of assembly, heterotetramer composed of FadE28 and FadE29. The cofactor is FAD.

It carries out the reaction 3-oxochol-4-en-22-oyl-CoA + A = 3-oxochola-4,17-dien-22-oyl-CoA + AH2. The protein operates within steroid metabolism; cholesterol degradation. Its function is as follows. Involved in the third cycle of side chain dehydrogenation in the beta-oxidation of cholesterol catabolism. May play an important role for the initial macrophage invasion, possibly in response to the acidification of phagosome. It contributes partly to the virulence by increasing the efficiency of beta-oxidation. Catalyzes the dehydrogenation of 2'-propanoyl-CoA ester side chains of 3-oxo-4-pregnene-20-carboxyl-CoA (3-OPC-CoA) to yield 3-oxo-4,17-pregnadiene-20-carboxyl-CoA (3-OPDC-CoA). Also able to dehydrogenate steroyl-CoA such as 3-oxo-chol-4-en-24-oyl-CoA (3-OCO-CoA), 1beta-(2'-propanoyl-CoA)-3a-alpha-H-7a-beta-methylhexahydro-4-indanone (indanone-CoA ester), hexahydroindanone and pregenenone. In Mycobacterium tuberculosis (strain ATCC 25618 / H37Rv), this protein is Acyl-CoA dehydrogenase FadE28 (fadE28).